We begin with the raw amino-acid sequence, 529 residues long: Ribonuclease Y (529 aa).

The chain crosses the membrane as a helical span at residues 4-24 (GLIYISLEVIVACLISALAMY). A KH domain is found at 216–297 (FTNRIALPCS…NRIEEVYHRV (82 aa)). Positions 342-435 (ALQHSKEVAL…VCAADALSAG (94 aa)) constitute an HD domain.

The protein belongs to the RNase Y family.

The protein resides in the cell membrane. In terms of biological role, endoribonuclease that initiates mRNA decay. The chain is Ribonuclease Y from Helicobacter acinonychis (strain Sheeba).